We begin with the raw amino-acid sequence, 419 residues long: Serine hydroxymethyltransferase (419 aa).

(6S)-5,6,7,8-tetrahydrofolate-binding positions include leucine 118 and 122-124 (GHL). Lysine 227 carries the N6-(pyridoxal phosphate)lysine modification.

This sequence belongs to the SHMT family. As to quaternary structure, homodimer. The cofactor is pyridoxal 5'-phosphate.

The protein resides in the cytoplasm. It carries out the reaction (6R)-5,10-methylene-5,6,7,8-tetrahydrofolate + glycine + H2O = (6S)-5,6,7,8-tetrahydrofolate + L-serine. The protein operates within one-carbon metabolism; tetrahydrofolate interconversion. It participates in amino-acid biosynthesis; glycine biosynthesis; glycine from L-serine: step 1/1. Catalyzes the reversible interconversion of serine and glycine with tetrahydrofolate (THF) serving as the one-carbon carrier. This reaction serves as the major source of one-carbon groups required for the biosynthesis of purines, thymidylate, methionine, and other important biomolecules. Also exhibits THF-independent aldolase activity toward beta-hydroxyamino acids, producing glycine and aldehydes, via a retro-aldol mechanism. The protein is Serine hydroxymethyltransferase of Chloroflexus aurantiacus (strain ATCC 29364 / DSM 637 / Y-400-fl).